A 226-amino-acid chain; its full sequence is Leucyl/phenylalanyl-tRNA--protein transferase (226 aa).

It belongs to the L/F-transferase family.

The protein localises to the cytoplasm. It carries out the reaction N-terminal L-lysyl-[protein] + L-leucyl-tRNA(Leu) = N-terminal L-leucyl-L-lysyl-[protein] + tRNA(Leu) + H(+). The enzyme catalyses N-terminal L-arginyl-[protein] + L-leucyl-tRNA(Leu) = N-terminal L-leucyl-L-arginyl-[protein] + tRNA(Leu) + H(+). It catalyses the reaction L-phenylalanyl-tRNA(Phe) + an N-terminal L-alpha-aminoacyl-[protein] = an N-terminal L-phenylalanyl-L-alpha-aminoacyl-[protein] + tRNA(Phe). Functionally, functions in the N-end rule pathway of protein degradation where it conjugates Leu, Phe and, less efficiently, Met from aminoacyl-tRNAs to the N-termini of proteins containing an N-terminal arginine or lysine. This is Leucyl/phenylalanyl-tRNA--protein transferase from Pseudomonas fluorescens (strain ATCC BAA-477 / NRRL B-23932 / Pf-5).